Here is a 78-residue protein sequence, read N- to C-terminus: RNA-binding protein Hfq (78 aa).

Positions 10-69 (DPFLNTLRKEHVPVSIYLVNGIKLQGQIESFDQYVVLLRNTVTQMVYKHAISTVVPARAV) constitute a Sm domain.

Belongs to the Hfq family. Homohexamer.

Functionally, RNA chaperone that binds small regulatory RNA (sRNAs) and mRNAs to facilitate mRNA translational regulation in response to envelope stress, environmental stress and changes in metabolite concentrations. Also binds with high specificity to tRNAs. The sequence is that of RNA-binding protein Hfq from Bordetella bronchiseptica (strain ATCC BAA-588 / NCTC 13252 / RB50) (Alcaligenes bronchisepticus).